Consider the following 267-residue polypeptide: Cilia- and flagella-associated protein 300 (267 aa).

The protein belongs to the CFAP300 family. Interacts with DNAAF2.

The protein localises to the cytoplasm. It is found in the cytoskeleton. It localises to the cilium axoneme. Functionally, cilium- and flagellum-specific protein that plays a role in axonemal structure organization and motility. May play a role in outer and inner dynein arm assembly. This is Cilia- and flagella-associated protein 300 from Bos taurus (Bovine).